We begin with the raw amino-acid sequence, 504 residues long: ATP-dependent rRNA helicase RRP3 (504 aa).

Over residues Ala-34–Ser-62 the composition is skewed to low complexity. The interval Ala-34–Ser-99 is disordered. The segment covering Ser-68–Gln-79 has biased composition (basic and acidic residues). The segment covering Ser-80–Ser-99 has biased composition (low complexity). The Q motif motif lies at Gln-98–Ala-126. Positions Ile-129–Glu-301 constitute a Helicase ATP-binding domain. An ATP-binding site is contributed by Ala-142–Thr-149. Positions Asp-248–Asp-251 match the DEAD box motif. One can recognise a Helicase C-terminal domain in the interval Arg-327–Leu-471.

It belongs to the DEAD box helicase family. DDX47/RRP3 subfamily. In terms of assembly, interacts with the SSU processome.

The protein localises to the nucleus. The catalysed reaction is ATP + H2O = ADP + phosphate + H(+). ATP-dependent rRNA helicase required for pre-ribosomal RNA processing. Involved in the maturation of the 35S-pre-rRNA and to its cleavage to mature 18S rRNA. This chain is ATP-dependent rRNA helicase RRP3, found in Lodderomyces elongisporus (strain ATCC 11503 / CBS 2605 / JCM 1781 / NBRC 1676 / NRRL YB-4239) (Yeast).